The sequence spans 217 residues: Glycosylphosphatidylinositol anchor biosynthesis protein 11 (217 aa).

The next 2 membrane-spanning stretches (helical) occupy residues threonine 45–asparagine 65 and asparagine 68–phenylalanine 88. The N-linked (GlcNAc...) asparagine glycan is linked to asparagine 102. 4 helical membrane-spanning segments follow: residues alanine 107–phenylalanine 127, leucine 134–tyrosine 154, tyrosine 169–aspartate 189, and isoleucine 197–leucine 217.

The protein belongs to the PIGF family.

It localises to the endoplasmic reticulum membrane. It functions in the pathway glycolipid biosynthesis; glycosylphosphatidylinositol-anchor biosynthesis. Acts in the GPI biosynthetic pathway between GlcNAc-PI synthesis and GPI transfer to protein. The chain is Glycosylphosphatidylinositol anchor biosynthesis protein 11 (GPI11) from Candida glabrata (strain ATCC 2001 / BCRC 20586 / JCM 3761 / NBRC 0622 / NRRL Y-65 / CBS 138) (Yeast).